The chain runs to 452 residues: Bifunctional protein GlmU (452 aa).

The tract at residues 1–226 (MSLAVVILAA…GWEVDGVNDR (226 aa)) is pyrophosphorylase. Residues 8-11 (LAAG), K22, Q73, 78-79 (GT), 99-101 (YGD), G136, E151, N166, and N224 each bind UDP-N-acetyl-alpha-D-glucosamine. D101 provides a ligand contact to Mg(2+). Residue N224 coordinates Mg(2+). The interval 227 to 247 (VQLARLERIYQQAQAETLMRD) is linker. Residues 248–452 (GVTLLDPSRL…VANWQRPKKG (205 aa)) are N-acetyltransferase. UDP-N-acetyl-alpha-D-glucosamine is bound by residues R330 and K348. H360 serves as the catalytic Proton acceptor. Positions 363 and 374 each coordinate UDP-N-acetyl-alpha-D-glucosamine. Residues A377, 383–384 (NY), S402, A420, and R437 contribute to the acetyl-CoA site.

In the N-terminal section; belongs to the N-acetylglucosamine-1-phosphate uridyltransferase family. It in the C-terminal section; belongs to the transferase hexapeptide repeat family. In terms of assembly, homotrimer. Requires Mg(2+) as cofactor.

The protein localises to the cytoplasm. It carries out the reaction alpha-D-glucosamine 1-phosphate + acetyl-CoA = N-acetyl-alpha-D-glucosamine 1-phosphate + CoA + H(+). It catalyses the reaction N-acetyl-alpha-D-glucosamine 1-phosphate + UTP + H(+) = UDP-N-acetyl-alpha-D-glucosamine + diphosphate. Its pathway is nucleotide-sugar biosynthesis; UDP-N-acetyl-alpha-D-glucosamine biosynthesis; N-acetyl-alpha-D-glucosamine 1-phosphate from alpha-D-glucosamine 6-phosphate (route II): step 2/2. It functions in the pathway nucleotide-sugar biosynthesis; UDP-N-acetyl-alpha-D-glucosamine biosynthesis; UDP-N-acetyl-alpha-D-glucosamine from N-acetyl-alpha-D-glucosamine 1-phosphate: step 1/1. The protein operates within bacterial outer membrane biogenesis; LPS lipid A biosynthesis. Catalyzes the last two sequential reactions in the de novo biosynthetic pathway for UDP-N-acetylglucosamine (UDP-GlcNAc). The C-terminal domain catalyzes the transfer of acetyl group from acetyl coenzyme A to glucosamine-1-phosphate (GlcN-1-P) to produce N-acetylglucosamine-1-phosphate (GlcNAc-1-P), which is converted into UDP-GlcNAc by the transfer of uridine 5-monophosphate (from uridine 5-triphosphate), a reaction catalyzed by the N-terminal domain. In Alcanivorax borkumensis (strain ATCC 700651 / DSM 11573 / NCIMB 13689 / SK2), this protein is Bifunctional protein GlmU.